The sequence spans 346 residues: Protein phosphatase 1 regulatory subunit 7 (346 aa).

The segment covering methionine 1–methionine 13 has biased composition (acidic residues). The segment at methionine 1–leucine 46 is disordered. Over residues glutamate 14 to glycine 37 the composition is skewed to basic and acidic residues. LRR repeat units lie at residues glutamate 63–lysine 84, lysine 85–valine 106, threonine 107–arginine 128, aspartate 129–serine 150, histidine 151–threonine 172, glutamine 173–arginine 194, glutamate 195–threonine 216, asparagine 217–valine 238, asparagine 239–asparagine 260, lysine 261–serine 282, and glutamate 283–serine 304. Residues asparagine 317–phenylalanine 346 enclose the LRRCT domain.

This sequence belongs to the SDS22 family.

It is found in the nucleus. Regulatory subunit of protein phosphatase 1. This chain is Protein phosphatase 1 regulatory subunit 7 (ppp1r7), found in Xenopus tropicalis (Western clawed frog).